The following is a 227-amino-acid chain: UPF0173 metal-dependent hydrolase SSO0099 (227 aa).

Belongs to the UPF0173 family.

The sequence is that of UPF0173 metal-dependent hydrolase SSO0099 from Saccharolobus solfataricus (strain ATCC 35092 / DSM 1617 / JCM 11322 / P2) (Sulfolobus solfataricus).